The sequence spans 548 residues: Multidrug efflux system permease protein Rv1217c (548 aa).

Helical transmembrane passes span 39 to 59 (VSLPLWVLLLSVPLATVYIAS), 99 to 119 (GIWKAGMFHTLIAVAVILTVI), 148 to 168 (ALLLSFGASIATGAIGALGLL), 178 to 198 (VAFGVALAASGMVFTAVAAVA), 210 to 230 (AVAFAVLGTAFALRAIGDAGS), 253 to 273 (WWVLLLSLATAAVLTVLAYRL), 313 to 333 (LLWTVGLCLYGLVMGSVVHGI), 359 to 379 (AFLALAFTMIGMVAAAFAVSL), 410 to 430 (LAMALAGSAVATLISGVAAGL), 450 to 470 (AAVQLPAVWLLSAVTVGLFGL), 477 to 497 (VAWGVLVGFIALYLLGSLAGF), and 521 to 541 (VPLLWLLAIDAALITLGAMAF).

As to quaternary structure, the complex is probably composed of two ATP-binding proteins (Rv1218c) and a transmembrane protein (Rv1217c).

The protein localises to the cell inner membrane. Probably part of the ABC transporter complex Rv1217c-Rv1218c involved in the resistance to a wide range of structurally unrelated drugs. Probably responsible for the translocation of the substrate across the membrane. The chain is Multidrug efflux system permease protein Rv1217c from Mycobacterium tuberculosis (strain ATCC 25618 / H37Rv).